Here is a 400-residue protein sequence, read N- to C-terminus: Acetate kinase (400 aa).

Mg(2+) is bound at residue Asn10. Lys17 is a binding site for ATP. Arg91 provides a ligand contact to substrate. Residue Asp150 is the Proton donor/acceptor of the active site. ATP contacts are provided by residues 210 to 214 (HLGNG), 285 to 287 (DCR), and 333 to 337 (GIGEN). Position 387 (Glu387) interacts with Mg(2+).

This sequence belongs to the acetokinase family. Homodimer. It depends on Mg(2+) as a cofactor. Mn(2+) is required as a cofactor.

The protein resides in the cytoplasm. The enzyme catalyses acetate + ATP = acetyl phosphate + ADP. The protein operates within metabolic intermediate biosynthesis; acetyl-CoA biosynthesis; acetyl-CoA from acetate: step 1/2. In terms of biological role, catalyzes the formation of acetyl phosphate from acetate and ATP. Can also catalyze the reverse reaction. This Yersinia pseudotuberculosis serotype I (strain IP32953) protein is Acetate kinase.